Consider the following 312-residue polypeptide: tRNA dimethylallyltransferase (312 aa).

10–17 (GPTAVGKT) is an ATP binding site. A substrate-binding site is contributed by 12–17 (TAVGKT). The interaction with substrate tRNA stretch occupies residues 35 to 38 (DSMQ).

It belongs to the IPP transferase family. In terms of assembly, monomer. It depends on Mg(2+) as a cofactor.

It catalyses the reaction adenosine(37) in tRNA + dimethylallyl diphosphate = N(6)-dimethylallyladenosine(37) in tRNA + diphosphate. In terms of biological role, catalyzes the transfer of a dimethylallyl group onto the adenine at position 37 in tRNAs that read codons beginning with uridine, leading to the formation of N6-(dimethylallyl)adenosine (i(6)A). The polypeptide is tRNA dimethylallyltransferase (Alkaliphilus metalliredigens (strain QYMF)).